We begin with the raw amino-acid sequence, 385 residues long: Meiotic recombination protein SPO11-2 (385 aa).

One can recognise a Topo IIA-type catalytic domain in the interval 24–169 (LPPAEVRARI…LGIMASSRGA (146 aa)). The active-site O-(5'-phospho-DNA)-tyrosine intermediate is Tyr-126. Mg(2+) contacts are provided by Glu-219 and Asp-272.

It belongs to the TOP6A family. As to quaternary structure, interacts with TOP6B. Mg(2+) serves as cofactor.

It localises to the nucleus. The catalysed reaction is ATP-dependent breakage, passage and rejoining of double-stranded DNA.. In terms of biological role, required for meiotic recombination. Mediates DNA cleavage that forms the double-strand breaks (DSB) that initiate meiotic recombination. The protein is Meiotic recombination protein SPO11-2 (SPO11-2) of Oryza sativa subsp. japonica (Rice).